Consider the following 457-residue polypeptide: ATP-dependent protease ATPase subunit HslU (457 aa).

ATP contacts are provided by residues V21, 63–68, D269, E335, and R407; that span reads GVGKTE.

This sequence belongs to the ClpX chaperone family. HslU subfamily. In terms of assembly, a double ring-shaped homohexamer of HslV is capped on each side by a ring-shaped HslU homohexamer. The assembly of the HslU/HslV complex is dependent on binding of ATP.

It localises to the cytoplasm. Functionally, ATPase subunit of a proteasome-like degradation complex; this subunit has chaperone activity. The binding of ATP and its subsequent hydrolysis by HslU are essential for unfolding of protein substrates subsequently hydrolyzed by HslV. HslU recognizes the N-terminal part of its protein substrates and unfolds these before they are guided to HslV for hydrolysis. The polypeptide is ATP-dependent protease ATPase subunit HslU (Desulfotalea psychrophila (strain LSv54 / DSM 12343)).